The following is a 293-amino-acid chain: AKT-interacting protein (293 aa).

Over residues 1–11 the composition is skewed to polar residues; sequence MNPFWSMSTNA. A disordered region spans residues 1–44; it reads MNPFWSMSTNAGRKRSDGEEQSGSGEQRASPARPPFGKKQLPSI. The UBC core domain maps to 75-223; the sequence is YLEYSLLAEF…VVDSVKLCNS (149 aa). The tract at residues 260–293 is disordered; the sequence is RPEDFNKGLPVSGLSWVKPGSTQPFSKEDNPLQT.

The protein belongs to the ubiquitin-conjugating enzyme family. FTS subfamily.

The protein resides in the cytoplasm. It is found in the cell membrane. May function to promote vesicle trafficking and/or fusion. May also regulate apoptosis. The chain is AKT-interacting protein (aktip) from Danio rerio (Zebrafish).